Reading from the N-terminus, the 264-residue chain is Tryptophan synthase alpha chain (264 aa).

Residues Glu49 and Asp60 each act as proton acceptor in the active site.

This sequence belongs to the TrpA family. Tetramer of two alpha and two beta chains.

The catalysed reaction is (1S,2R)-1-C-(indol-3-yl)glycerol 3-phosphate + L-serine = D-glyceraldehyde 3-phosphate + L-tryptophan + H2O. The protein operates within amino-acid biosynthesis; L-tryptophan biosynthesis; L-tryptophan from chorismate: step 5/5. The alpha subunit is responsible for the aldol cleavage of indoleglycerol phosphate to indole and glyceraldehyde 3-phosphate. This is Tryptophan synthase alpha chain from Lachnospira eligens (strain ATCC 27750 / DSM 3376 / VPI C15-48 / C15-B4) (Eubacterium eligens).